Consider the following 386-residue polypeptide: Synaptotagmin-5 (386 aa).

The segment covering 1–16 (MFPEPPTPGSPAPETP) has biased composition (pro residues). Residues 1 to 21 (MFPEPPTPGSPAPETPPDSSR) form a disordered region. Residues 1–24 (MFPEPPTPGSPAPETPPDSSRIRQ) lie on the Vesicular side of the membrane. Residues 25–45 (GAVPAWVLATILLGSGLLVFS) traverse the membrane as a helical segment. The Cytoplasmic portion of the chain corresponds to 46–386 (SCFCLYRKRC…PDRARPIPAP (341 aa)). C2 domains follow at residues 108–227 (QLGR…QAWR) and 239–372 (KLGD…AQWH). Residues leucine 138, aspartate 139, aspartate 145, aspartate 197, phenylalanine 198, aspartate 199, serine 202, aspartate 205, aspartate 270, aspartate 276, aspartate 330, and aspartate 332 each coordinate Ca(2+).

This sequence belongs to the synaptotagmin family. Homodimer. Interacts with both alpha- and beta-tubulin. It depends on Ca(2+) as a cofactor. In terms of tissue distribution, expressed in kidney, adipose tissue, lung and heart, as well as at higher levels in brain.

It localises to the cytoplasmic vesicle. The protein resides in the secretory vesicle. Its subcellular location is the synaptic vesicle membrane. It is found in the recycling endosome membrane. In terms of biological role, may be involved in Ca(2+)-dependent exocytosis of secretory vesicles through Ca(2+) and phospholipid binding to the C2 domain or may serve as Ca(2+) sensors in the process of vesicular trafficking and exocytosis. Regulates the Ca(2+)-dependent secretion of norepinephrine in PC12 cells. Required for export from the endocytic recycling compartment to the cell surface. In Rattus norvegicus (Rat), this protein is Synaptotagmin-5 (Syt5).